The chain runs to 315 residues: DNA-directed RNA polymerase subunit alpha (315 aa).

The segment at 1–228 (MLEIEKPIIE…EHFKLFMSLT (228 aa)) is alpha N-terminal domain (alpha-NTD). The interval 245–315 (KEKVLEMTVE…LGLALKLTEE (71 aa)) is alpha C-terminal domain (alpha-CTD).

It belongs to the RNA polymerase alpha chain family. As to quaternary structure, homodimer. The RNAP catalytic core consists of 2 alpha, 1 beta, 1 beta' and 1 omega subunit. When a sigma factor is associated with the core the holoenzyme is formed, which can initiate transcription.

The catalysed reaction is RNA(n) + a ribonucleoside 5'-triphosphate = RNA(n+1) + diphosphate. Functionally, DNA-dependent RNA polymerase catalyzes the transcription of DNA into RNA using the four ribonucleoside triphosphates as substrates. The polypeptide is DNA-directed RNA polymerase subunit alpha (Clostridium beijerinckii (strain ATCC 51743 / NCIMB 8052) (Clostridium acetobutylicum)).